Reading from the N-terminus, the 459-residue chain is Putrescine aminotransferase (459 aa).

Residues 150-151 and Gln274 contribute to the pyridoxal 5'-phosphate site; that span reads GT. At Lys300 the chain carries N6-(pyridoxal phosphate)lysine. Position 332 (Thr332) interacts with pyridoxal 5'-phosphate.

Belongs to the class-III pyridoxal-phosphate-dependent aminotransferase family. Putrescine aminotransferase subfamily. Requires pyridoxal 5'-phosphate as cofactor.

It catalyses the reaction an alkane-alpha,omega-diamine + 2-oxoglutarate = an omega-aminoaldehyde + L-glutamate. The enzyme catalyses putrescine + 2-oxoglutarate = 1-pyrroline + L-glutamate + H2O. The catalysed reaction is cadaverine + 2-oxoglutarate = 5-aminopentanal + L-glutamate. It functions in the pathway amine and polyamine degradation; putrescine degradation; 4-aminobutanal from putrescine (transaminase route): step 1/1. Catalyzes the aminotransferase reaction from putrescine to 2-oxoglutarate, leading to glutamate and 4-aminobutanal, which spontaneously cyclizes to form 1-pyrroline. This is the first step in one of two pathways for putrescine degradation, where putrescine is converted into 4-aminobutanoate (gamma-aminobutyrate or GABA) via 4-aminobutanal. Also functions as a cadaverine transaminase in a a L-lysine degradation pathway to succinate that proceeds via cadaverine, glutarate and L-2-hydroxyglutarate. This chain is Putrescine aminotransferase, found in Escherichia coli O81 (strain ED1a).